The following is a 290-amino-acid chain: Porphobilinogen deaminase (290 aa).

Cys-237 is subject to S-(dipyrrolylmethanemethyl)cysteine.

It belongs to the HMBS family. In terms of assembly, monomer. Dipyrromethane serves as cofactor.

It carries out the reaction 4 porphobilinogen + H2O = hydroxymethylbilane + 4 NH4(+). The protein operates within porphyrin-containing compound metabolism; protoporphyrin-IX biosynthesis; coproporphyrinogen-III from 5-aminolevulinate: step 2/4. Functionally, tetrapolymerization of the monopyrrole PBG into the hydroxymethylbilane pre-uroporphyrinogen in several discrete steps. The protein is Porphobilinogen deaminase of Clostridium botulinum (strain ATCC 19397 / Type A).